Here is a 541-residue protein sequence, read N- to C-terminus: Protein yellow (541 aa).

The signal sequence occupies residues Met1–Ala21. N-linked (GlcNAc...) asparagine glycosylation occurs at Asn144.

The protein belongs to the major royal jelly protein family.

It localises to the secreted. Functionally, controls the pigmentation pattern of the adult cuticle and larval mouth parts. The chain is Protein yellow (y) from Drosophila erecta (Fruit fly).